The chain runs to 201 residues: Recombination protein RecR (201 aa).

The segment at 60-75 adopts a C4-type zinc-finger fold; that stretch reads CSCCGNVDTSDPCTIC. Residues 83 to 178 form the Toprim domain; the sequence is ATLIVVEDVS…RVTRLAHGVP (96 aa).

The protein belongs to the RecR family.

Functionally, may play a role in DNA repair. It seems to be involved in an RecBC-independent recombinational process of DNA repair. It may act with RecF and RecO. In Brucella melitensis biotype 1 (strain ATCC 23456 / CCUG 17765 / NCTC 10094 / 16M), this protein is Recombination protein RecR.